Reading from the N-terminus, the 501-residue chain is Protein NBA1 (501 aa).

Disordered regions lie at residues 1-78 (MSEE…PGDN) and 102-133 (NRQQTQERRTSKDSNSLYSLKEPVSKNELPSL). Residues 11–20 (SRATLNTQRL) are compositionally biased toward polar residues. The span at 46 to 55 (ITEEKADQSD) shows a compositional bias: basic and acidic residues. Position 138 is a phosphoserine (Ser138). Positions 146–165 (LSDNQSTKSNTNADEIVIKP) are disordered. Residues 148–158 (DNQSTKSNTNA) show a composition bias toward polar residues. Position 208 is a phosphoserine (Ser208). Disordered stretches follow at residues 267–286 (PIRSETNDYNPTIPPRSKDR) and 338–366 (AATSMPPEEETYLTRPLPSTPNEDSRVTS). The interval 275-501 (YNPTIPPRSK…DKATKALEGF (227 aa)) is necessary for the normal cellular distribution and bud neck targeting. Thr403 is subject to Phosphothreonine.

As to quaternary structure, interacts with NAP1 (via the central domain consisting of amino acids 143 to 362). Copurifies with ribosomes. Post-translationally, phosphorylated by CDC28.

The protein resides in the bud neck. Its subcellular location is the cytoplasm. This Saccharomyces cerevisiae (strain ATCC 204508 / S288c) (Baker's yeast) protein is Protein NBA1 (NBA1).